Reading from the N-terminus, the 252-residue chain is Cysteine-rich repeat secretory protein 38 (252 aa).

The signal sequence occupies residues 1–27 (MSSLKRIVWFPILAIAIQILSIHTVLS). 2 consecutive Gnk2-homologous domains span residues 34 to 136 (FLFH…STNF) and 142 to 248 (FENR…IYPF).

Belongs to the cysteine-rich repeat secretory protein family.

The protein localises to the secreted. This is Cysteine-rich repeat secretory protein 38 (CRRSP38) from Arabidopsis thaliana (Mouse-ear cress).